Here is a 203-residue protein sequence, read N- to C-terminus: uncharacterized protein (203 aa).

The segment at 1 to 23 is disordered; sequence MGSSFVIDRSSSSPAPPRGPAPK.

This is an uncharacterized protein from Saccharomyces cerevisiae (strain ATCC 204508 / S288c) (Baker's yeast).